A 361-amino-acid chain; its full sequence is G-protein coupled receptor 52 (361 aa).

The Extracellular portion of the chain corresponds to 1-44 (MNESRWTEWRILNMSSSIVNVSEHHSCPLGFGHYSVEDVCIFET). N-linked (GlcNAc...) asparagine glycans are attached at residues asparagine 2, asparagine 13, and asparagine 20. The chain crosses the membrane as a helical span at residues 45 to 65 (VVIVLLTFLIISGNLTVIFVF). Topologically, residues 66–81 (HCAPLLHHYTTSYFIQ) are cytoplasmic. Residues 82 to 102 (TMAYADLLVGVTCLVPTLSLL) traverse the membrane as a helical segment. Residues 103-115 (HYSTGVHESLTCQ) are Extracellular-facing. Cysteine 114 and cysteine 193 are joined by a disulfide. Residues 116–136 (VFGYIISVLKSVSMACLACIS) form a helical membrane-spanning segment. The Cytoplasmic portion of the chain corresponds to 137 to 159 (VDRYLAITKPLSYNQLVTPCRLR). Residues 160-180 (ICIIMIWIYSCLIFLPSFFGW) traverse the membrane as a helical segment. At 181-205 (GKPGYHGDIFEWCATSWLTSAYFTC) the chain is on the extracellular side. The helical transmembrane segment at 206-226 (FIVCLLYAPAALVVCFTYFHI) threads the bilayer. Topologically, residues 227-265 (FKICRQHTKEINDRRARFPSHEVEASREAGHSPDRRYAM) are cytoplasmic. The chain crosses the membrane as a helical span at residues 266–286 (VLFRITSVFYMLWLPYIIYFL). The Extracellular portion of the chain corresponds to 287-296 (LESSRVLDNP). Residues 297–317 (TLSFLTTWLAISNSFCNCVIY) traverse the membrane as a helical segment. Over 318 to 361 (SLSNSVFRLGLRRLSETMCTSCVCAKDQEAQDPKPRRRANSCSI) the chain is Cytoplasmic.

The protein belongs to the G-protein coupled receptor 1 family. Expressed in brain, especially in striatum. Expressed in the striatum, nucleus accumbens, and lateral globus pallidus.

Its subcellular location is the cell membrane. Its function is as follows. G- protein coupled receptor activated by antipsychotics reserpine leading to an increase in intracellular cAMP and its internalization. May play a role in locomotor activity through modulation of dopamine, NMDA and ADORA2A-induced locomotor activity. These behavioral changes are accompanied by modulation of the dopamine receptor signaling pathway in striatum. Modulates HTT level via cAMP-dependent but PKA independent mechanisms throught activation of RAB39B that translocates HTT to the endoplasmic reticulum, thus avoiding proteasome degradation. This is G-protein coupled receptor 52 from Mus musculus (Mouse).